Reading from the N-terminus, the 431-residue chain is Glutamyl-tRNA(Gln) amidotransferase subunit A (431 aa).

Active-site charge relay system residues include lysine 37 and serine 112. The active-site Acyl-ester intermediate is the serine 136.

It belongs to the amidase family. GatA subfamily. As to quaternary structure, heterotrimer of A, B and C subunits.

The enzyme catalyses L-glutamyl-tRNA(Gln) + L-glutamine + ATP + H2O = L-glutaminyl-tRNA(Gln) + L-glutamate + ADP + phosphate + H(+). Functionally, allows the formation of correctly charged Gln-tRNA(Gln) through the transamidation of misacylated Glu-tRNA(Gln) in organisms which lack glutaminyl-tRNA synthetase. The reaction takes place in the presence of glutamine and ATP through an activated gamma-phospho-Glu-tRNA(Gln). In Methanospirillum hungatei JF-1 (strain ATCC 27890 / DSM 864 / NBRC 100397 / JF-1), this protein is Glutamyl-tRNA(Gln) amidotransferase subunit A.